We begin with the raw amino-acid sequence, 154 residues long: Xanthine-guanine phosphoribosyltransferase (154 aa).

Residues 37–38 (RG) and 90–98 (DDLVDTGNT) contribute to the 5-phospho-alpha-D-ribose 1-diphosphate site. Asp-91 is a Mg(2+) binding site. Guanine contacts are provided by Asp-94 and Ile-137. Asp-94 and Ile-137 together coordinate xanthine. Residues 94–98 (DTGNT) and 136–137 (WI) contribute to the GMP site.

It belongs to the purine/pyrimidine phosphoribosyltransferase family. XGPT subfamily. Homotetramer. Requires Mg(2+) as cofactor.

Its subcellular location is the cell inner membrane. The enzyme catalyses GMP + diphosphate = guanine + 5-phospho-alpha-D-ribose 1-diphosphate. It catalyses the reaction XMP + diphosphate = xanthine + 5-phospho-alpha-D-ribose 1-diphosphate. It carries out the reaction IMP + diphosphate = hypoxanthine + 5-phospho-alpha-D-ribose 1-diphosphate. Its pathway is purine metabolism; GMP biosynthesis via salvage pathway; GMP from guanine: step 1/1. It functions in the pathway purine metabolism; XMP biosynthesis via salvage pathway; XMP from xanthine: step 1/1. Its function is as follows. Purine salvage pathway enzyme that catalyzes the transfer of the ribosyl-5-phosphate group from 5-phospho-alpha-D-ribose 1-diphosphate (PRPP) to the N9 position of the 6-oxopurines guanine and xanthine to form the corresponding ribonucleotides GMP (guanosine 5'-monophosphate) and XMP (xanthosine 5'-monophosphate), with the release of PPi. To a lesser extent, also acts on hypoxanthine. This Histophilus somni (strain 129Pt) (Haemophilus somnus) protein is Xanthine-guanine phosphoribosyltransferase.